We begin with the raw amino-acid sequence, 1333 residues long: Elongator complex protein 1 (1333 aa).

A phosphoserine mark is found at S805, S1172, and S1175. Positions 886–1333 (VDVNELFNHS…RSQWKLSLLE (448 aa)) are mediates dimerization. Positions 1175-1209 (SGSEMSGRYSHSNSRISARSSKNRRKAERKKHSLK) are disordered. Residues 1192 to 1210 (ARSSKNRRKAERKKHSLKE) are required for binding to tRNA. Residues 1195–1207 (SKNRRKAERKKHS) are compositionally biased toward basic residues.

The protein belongs to the ELP1/IKA1 family. As to quaternary structure, homodimer; dimerization promotes ELP1 stability and elongator complex formation. Component of the elongator complex which consists of ELP1, ELP2, ELP3, ELP4, ELP5 and ELP6. Interacts preferentially with MAP3K14/NIK followed by IKK-alpha and IKK-beta. Phosphorylated. In the testis, expression is restricted to germ cells during spermatogenesis with no expression detected in somatic cells such as Sertoli cells or Leydig cells (at protein level). In the ovary, expressed in oocytes of primary, secondary and antral follicles (at protein level). Widely expressed in adult tissues with highest levels in brain and also expressed at all embryonic stages.

The protein localises to the cytoplasm. The protein resides in the nucleus. Its pathway is tRNA modification; 5-methoxycarbonylmethyl-2-thiouridine-tRNA biosynthesis. In terms of biological role, component of the elongator complex which is required for multiple tRNA modifications, including mcm5U (5-methoxycarbonylmethyl uridine), mcm5s2U (5-methoxycarbonylmethyl-2-thiouridine), and ncm5U (5-carbamoylmethyl uridine). The elongator complex catalyzes the formation of carboxymethyluridine in the wobble base at position 34 in tRNAs. Regulates the migration and branching of projection neurons in the developing cerebral cortex, through a process depending on alpha-tubulin acetylation. ELP1 binds to tRNA, mediating interaction of the elongator complex with tRNA. May act as a scaffold protein that assembles active IKK-MAP3K14 complexes (IKKA, IKKB and MAP3K14/NIK). The sequence is that of Elongator complex protein 1 (Elp1) from Mus musculus (Mouse).